The primary structure comprises 304 residues: tRNA U34 carboxymethyltransferase (304 aa).

Carboxy-S-adenosyl-L-methionine-binding positions include K73, W87, K92, G111, 133–135, 160–161, Y180, and R295; these read DPS and VE.

This sequence belongs to the class I-like SAM-binding methyltransferase superfamily. CmoB family. Homotetramer.

It catalyses the reaction carboxy-S-adenosyl-L-methionine + 5-hydroxyuridine(34) in tRNA = 5-carboxymethoxyuridine(34) in tRNA + S-adenosyl-L-homocysteine + H(+). In terms of biological role, catalyzes carboxymethyl transfer from carboxy-S-adenosyl-L-methionine (Cx-SAM) to 5-hydroxyuridine (ho5U) to form 5-carboxymethoxyuridine (cmo5U) at position 34 in tRNAs. The chain is tRNA U34 carboxymethyltransferase from Aliarcobacter butzleri (strain RM4018) (Arcobacter butzleri).